The following is a 496-amino-acid chain: Aspartic proteinase (496 aa).

The first 24 residues, 1–24, serve as a signal peptide directing secretion; sequence MAKRHLLLVTTCLWALSCALLLHA. A propeptide spans 25-59 (activation peptide); the sequence is SSDGFLRVNLNKKRLDKEDLTAAKLAQQGNRLLKT. A Peptidase A1 domain is found at 77 to 493; sequence YYGVIGLGSP…DFGKDRIGFA (417 aa). The active site involves aspartate 95. Intrachain disulfides connect cysteine 108–cysteine 114 and cysteine 273–cysteine 277. Aspartate 282 is an active-site residue. Residues 307 to 407 enclose the Saposin B-type domain; it reads IISTECKEVV…NQLCERLPSP (101 aa). Disulfide bonds link cysteine 312–cysteine 401, cysteine 337–cysteine 373, cysteine 343–cysteine 370, and cysteine 415–cysteine 452. The N-linked (GlcNAc...) asparagine glycan is linked to asparagine 387.

It belongs to the peptidase A1 family.

The protein resides in the vacuole. Its function is as follows. Involved in the breakdown of propeptides of storage proteins in protein-storage vacuoles. This chain is Aspartic proteinase (RAP), found in Oryza sativa subsp. japonica (Rice).